The chain runs to 483 residues: MVRIPRRKLLPSCLCMTATVFLMVTVQVLVELGKFERKKFKNSDLQDGQKDVEGDPKHLNPLPKKDALALSGRNKVDAGSYPIVLWWSPLTGETGRLGQCGADACFFTINRTFQHHPMTKAFLFYGTDFNIDSLPLPRKAHHDWALFHEESPKNNYKLFHKPVITLFNHTATFSRHSDLPLTTQYLESVEVLKSLRYLVPLQSKNNLRQKLAPLVYVQSDCDPPSDRDSYVRELMAYIEVDSYGECLQNKHLPQQLKNPASMDADAFYRVLAQYKFILAFENAVCDDYITEKFWRPLKLGVVPVYYGSPTIADWLPSNRSAILVSEFSHPRELASFIRRLDYDDGLYETYVEWKLKGEISNQRLLTALREREWGVQDINQDNYIDTFECMVCRRVWANRRLQEQGLPPKQWKADVSHLHCPEPTLFAFSSPASPALRGRSLRELWLPSFQQSKKEAQALRWLVDRNQNFSSEEFWALVFKDSF.

Residues M1–K8 lie on the Cytoplasmic side of the membrane. A helical; Signal-anchor for type II membrane protein transmembrane segment spans residues L9–E31. Residues L32–F483 are Lumenal-facing. A disordered region spans residues L45 to K64. N-linked (GlcNAc...) asparagine glycans are attached at residues N110, N168, and N318. C389 and C392 are oxidised to a cystine. An N-linked (GlcNAc...) asparagine glycan is attached at N468.

It belongs to the glycosyltransferase 10 family.

The protein resides in the endoplasmic reticulum membrane. The enzyme catalyses L-threonyl-[protein] + GDP-beta-L-fucose = 3-O-(alpha-L-fucosyl)-L-threonyl-[protein] + GDP + H(+). It catalyses the reaction L-seryl-[protein] + GDP-beta-L-fucose = 3-O-(alpha-L-fucosyl)-L-seryl-[protein] + GDP + H(+). It functions in the pathway protein modification; protein glycosylation. Functionally, protein O-fucosyltransferase that specifically catalyzes O-fucosylation of serine or threonine residues in EMI domains of target proteins, such as MMRN1, MMRN2 and EMID1. Attaches fucose through an O-glycosidic linkage. O-fucosylation of EMI domain-containing proteins may be required for facilitating protein folding and secretion. May also show alpha-(1,3)-fucosyltransferase activity toward the innermost N-acetyl glucosamine (GlcNAc) residue in biantennary N-glycan acceptors. However, this was tested with a library of synthetic substrates and this activity is unsure in vivo. May be involved in biosynthesis of Lewis X-carrying biantennary N-glycans that regulate neuron stem cell self-renewal during brain development. The protein is GDP-fucose protein O-fucosyltransferase 3 (Fut10) of Rattus norvegicus (Rat).